The chain runs to 341 residues: HTH-type transcriptional repressor PurR (341 aa).

Residues 2 to 56 (ATIKDVAKHAGVSTTTVSHVINKTRFVAENTKAAVWAAIKELHYSPSAVARSLKV) enclose the HTH lacI-type domain. The segment at residues 4-23 (IKDVAKHAGVSTTTVSHVIN) is a DNA-binding region (H-T-H motif). A DNA-binding region spans residues 48–56 (SAVARSLKV). Residues tyrosine 73, arginine 190, threonine 192, phenylalanine 221, and aspartate 275 each contribute to the hypoxanthine site.

Homodimer.

It participates in purine metabolism; purine nucleotide biosynthesis [regulation]. Functionally, is the main repressor of the genes involved in the de novo synthesis of purine nucleotides, regulating purB, purC, purEK, purF, purHD, purL, purMN and guaBA expression. PurR is allosterically activated to bind its cognate DNA by binding the purine corepressors, hypoxanthine or guanine, thereby effecting transcription repression. The polypeptide is HTH-type transcriptional repressor PurR (Yersinia pseudotuberculosis serotype O:1b (strain IP 31758)).